The chain runs to 398 residues: tRNA(Ile)-lysidine synthase (398 aa).

25–30 (SGGVDS) serves as a coordination point for ATP.

This sequence belongs to the tRNA(Ile)-lysidine synthase family.

The protein localises to the cytoplasm. The catalysed reaction is cytidine(34) in tRNA(Ile2) + L-lysine + ATP = lysidine(34) in tRNA(Ile2) + AMP + diphosphate + H(+). Functionally, ligates lysine onto the cytidine present at position 34 of the AUA codon-specific tRNA(Ile) that contains the anticodon CAU, in an ATP-dependent manner. Cytidine is converted to lysidine, thus changing the amino acid specificity of the tRNA from methionine to isoleucine. The chain is tRNA(Ile)-lysidine synthase from Francisella tularensis subsp. holarctica (strain OSU18).